A 443-amino-acid chain; its full sequence is Ribosomal protein uS12 methylthiotransferase RimO (443 aa).

The 112-residue stretch at 5 to 116 (PTIAINHLGC…IVDIIRRTEQ (112 aa)) folds into the MTTase N-terminal domain. [4Fe-4S] cluster contacts are provided by C14, C50, C79, C154, C158, and C161. Residues 140–369 (TTNEAIAYLR…MALQQPISAQ (230 aa)) form the Radical SAM core domain. One can recognise a TRAM domain in the interval 372-438 (AACLGQTLDV…DYDLYGMTAE (67 aa)).

This sequence belongs to the methylthiotransferase family. RimO subfamily. [4Fe-4S] cluster serves as cofactor.

Its subcellular location is the cytoplasm. The catalysed reaction is L-aspartate(89)-[ribosomal protein uS12]-hydrogen + (sulfur carrier)-SH + AH2 + 2 S-adenosyl-L-methionine = 3-methylsulfanyl-L-aspartate(89)-[ribosomal protein uS12]-hydrogen + (sulfur carrier)-H + 5'-deoxyadenosine + L-methionine + A + S-adenosyl-L-homocysteine + 2 H(+). In terms of biological role, catalyzes the methylthiolation of an aspartic acid residue of ribosomal protein uS12. The protein is Ribosomal protein uS12 methylthiotransferase RimO of Synechocystis sp. (strain ATCC 27184 / PCC 6803 / Kazusa).